The primary structure comprises 87 residues: Large ribosomal subunit protein bL31B (87 aa).

It belongs to the bacterial ribosomal protein bL31 family. Type B subfamily. Part of the 50S ribosomal subunit.

The chain is Large ribosomal subunit protein bL31B from Shigella boydii serotype 4 (strain Sb227).